The following is a 1489-amino-acid chain: Chromatin-remodeling ATPase INO80 (1489 aa).

2 disordered regions span residues 112–375 (PSIP…APSY) and 467–487 (EEAKKRKLAPPPPPPPQQVRR). 2 stretches are compositionally biased toward polar residues: residues 122 to 142 (SVVSSDTEQIQDSETTANSKK) and 149 to 162 (IKTSGKSPTKSPAT). A compositionally biased stretch (basic residues) spans 164–177 (GRRRGAGGNRRVKR). A compositionally biased stretch (polar residues) spans 179–190 (SNLSKTVRSRNA). Over residues 198–207 (NENIENGGTT) the composition is skewed to low complexity. Positions 235–252 (HTEKDASGSAADLDKDIV) are enriched in basic and acidic residues. Over residues 268 to 289 (VSSTSLLSRNKSNKPTKSSPLT) the composition is skewed to polar residues. 2 stretches are compositionally biased toward acidic residues: residues 305–319 (GNEDMDHDSVLDADD) and 327–371 (NPND…DDDF). The 126-residue stretch at 518 to 643 (IWKDMARRDS…SHFIGSKIKT (126 aa)) folds into the DBINO domain. Residues 758–930 (ANLYDQGING…WALLHFIMPS (173 aa)) enclose the Helicase ATP-binding domain. 771 to 778 (DEMGLGKT) is a binding site for ATP. The DEAQ box motif lies at 881–884 (DEAQ). Residues 1323–1479 (KLDELLVKLK…KAKENKQKII (157 aa)) enclose the Helicase C-terminal domain.

This sequence belongs to the SNF2/RAD54 helicase family. Component of the INO80 chromatin-remodeling complex.

The protein resides in the nucleus. It carries out the reaction ATP + H2O = ADP + phosphate + H(+). Functionally, ATPase component of the INO80 complex which remodels chromatin by shifting nucleosomes and is involved in DNA repair. The polypeptide is Chromatin-remodeling ATPase INO80 (INO80) (Kluyveromyces lactis (strain ATCC 8585 / CBS 2359 / DSM 70799 / NBRC 1267 / NRRL Y-1140 / WM37) (Yeast)).